Reading from the N-terminus, the 972-residue chain is FHF complex subunit HOOK-interacting protein 1B (972 aa).

Disordered stretches follow at residues 465 to 496 (APSPPRPEHASWARGPGSPSVDSSSVMTVPRP), 510 to 547 (SLSGSESPGPAPCSPGLSASPASSPGRRPTPAEEAGEL), 573 to 642 (SAPY…PGSW), and 710 to 733 (SFTCPPEPPGPFLNSPLRTPNQLP). S467 is modified (phosphoserine). Residues 479 to 490 (GPGSPSVDSSSV) are compositionally biased toward low complexity. 4 positions are modified to phosphoserine: S510, S523, S529, and S533. Over residues 523–535 (SPGLSASPASSPG) the composition is skewed to low complexity. The span at 618–627 (GLAGGAGEGP) shows a compositional bias: gly residues. Residues S859 and S897 each carry the phosphoserine modification.

This sequence belongs to the FHIP family. As to quaternary structure, component of the FTS/Hook/FHIP complex (FHF complex), composed of AKTIP/FTS, FHIP1B, and one or more members of the Hook family of proteins HOOK1, HOOK2, and HOOK3. The FHF complex associates with the homotypic vesicular sorting complex (the HOPS complex).

In terms of biological role, component of the FTS/Hook/FHIP complex (FHF complex). The FHF complex may function to promote vesicle trafficking and/or fusion via the homotypic vesicular protein sorting complex (the HOPS complex). FHF complex promotes the distribution of AP-4 complex to the perinuclear area of the cell. This chain is FHF complex subunit HOOK-interacting protein 1B (FHIP1B), found in Pongo abelii (Sumatran orangutan).